Consider the following 477-residue polypeptide: Bifunctional protein HldE (477 aa).

A ribokinase region spans residues 1–318; that stretch reads MKVTLPEFER…ENAVRGRADT (318 aa). Position 179 is an N6-acetyllysine (K179). 195-198 lines the ATP pocket; sequence NLSE. The active site involves D264. Residues 344-477 form a cytidylyltransferase region; the sequence is MTNGVFDILH…IKKIQQDKKG (134 aa).

The protein in the N-terminal section; belongs to the carbohydrate kinase PfkB family. It in the C-terminal section; belongs to the cytidylyltransferase family. Homodimer.

The catalysed reaction is D-glycero-beta-D-manno-heptose 7-phosphate + ATP = D-glycero-beta-D-manno-heptose 1,7-bisphosphate + ADP + H(+). The enzyme catalyses D-glycero-beta-D-manno-heptose 1-phosphate + ATP + H(+) = ADP-D-glycero-beta-D-manno-heptose + diphosphate. It participates in nucleotide-sugar biosynthesis; ADP-L-glycero-beta-D-manno-heptose biosynthesis; ADP-L-glycero-beta-D-manno-heptose from D-glycero-beta-D-manno-heptose 7-phosphate: step 1/4. The protein operates within nucleotide-sugar biosynthesis; ADP-L-glycero-beta-D-manno-heptose biosynthesis; ADP-L-glycero-beta-D-manno-heptose from D-glycero-beta-D-manno-heptose 7-phosphate: step 3/4. Functionally, catalyzes the phosphorylation of D-glycero-D-manno-heptose 7-phosphate at the C-1 position to selectively form D-glycero-beta-D-manno-heptose-1,7-bisphosphate. In terms of biological role, catalyzes the ADP transfer from ATP to D-glycero-beta-D-manno-heptose 1-phosphate, yielding ADP-D-glycero-beta-D-manno-heptose. This Escherichia fergusonii (strain ATCC 35469 / DSM 13698 / CCUG 18766 / IAM 14443 / JCM 21226 / LMG 7866 / NBRC 102419 / NCTC 12128 / CDC 0568-73) protein is Bifunctional protein HldE.